The primary structure comprises 211 residues: Large ribosomal subunit protein bL25 (211 aa).

It belongs to the bacterial ribosomal protein bL25 family. CTC subfamily. In terms of assembly, part of the 50S ribosomal subunit; part of the 5S rRNA/L5/L18/L25 subcomplex. Contacts the 5S rRNA. Binds to the 5S rRNA independently of L5 and L18.

Functionally, this is one of the proteins that binds to the 5S RNA in the ribosome where it forms part of the central protuberance. The chain is Large ribosomal subunit protein bL25 from Anaplasma phagocytophilum (strain HZ).